We begin with the raw amino-acid sequence, 424 residues long: Serine--tRNA ligase (424 aa).

L-serine is bound at residue 230–232; sequence TAE. 261–263 lines the ATP pocket; sequence RSE. Glu284 is a binding site for L-serine. 348–351 is an ATP binding site; it reads EISS. Residue Ser384 participates in L-serine binding.

It belongs to the class-II aminoacyl-tRNA synthetase family. Type-1 seryl-tRNA synthetase subfamily. In terms of assembly, homodimer. The tRNA molecule binds across the dimer.

The protein resides in the cytoplasm. The enzyme catalyses tRNA(Ser) + L-serine + ATP = L-seryl-tRNA(Ser) + AMP + diphosphate + H(+). The catalysed reaction is tRNA(Sec) + L-serine + ATP = L-seryl-tRNA(Sec) + AMP + diphosphate + H(+). It participates in aminoacyl-tRNA biosynthesis; selenocysteinyl-tRNA(Sec) biosynthesis; L-seryl-tRNA(Sec) from L-serine and tRNA(Sec): step 1/1. Its function is as follows. Catalyzes the attachment of serine to tRNA(Ser). Is also able to aminoacylate tRNA(Sec) with serine, to form the misacylated tRNA L-seryl-tRNA(Sec), which will be further converted into selenocysteinyl-tRNA(Sec). This is Serine--tRNA ligase from Nitratidesulfovibrio vulgaris (strain ATCC 29579 / DSM 644 / CCUG 34227 / NCIMB 8303 / VKM B-1760 / Hildenborough) (Desulfovibrio vulgaris).